Here is a 51-residue protein sequence, read N- to C-terminus: Insulin (51 aa).

Cystine bridges form between Cys-7–Cys-37, Cys-19–Cys-50, and Cys-36–Cys-41.

Belongs to the insulin family. In terms of assembly, heterodimer of a B chain and an A chain linked by two disulfide bonds.

It is found in the secreted. Functionally, insulin decreases blood glucose concentration. It increases cell permeability to monosaccharides, amino acids and fatty acids. It accelerates glycolysis, the pentose phosphate cycle, and glycogen synthesis in liver. The sequence is that of Insulin (INS) from Anser anser anser (Western greylag goose).